The chain runs to 396 residues: Phosphoglycerate kinase (396 aa).

Substrate is bound by residues 21 to 23, Arg36, 59 to 62, Arg118, and Arg151; these read DLN and HFGR. ATP-binding positions include Lys201, Glu323, and 353–356; that span reads GGDT.

It belongs to the phosphoglycerate kinase family. In terms of assembly, monomer.

The protein resides in the cytoplasm. The enzyme catalyses (2R)-3-phosphoglycerate + ATP = (2R)-3-phospho-glyceroyl phosphate + ADP. It functions in the pathway carbohydrate degradation; glycolysis; pyruvate from D-glyceraldehyde 3-phosphate: step 2/5. In Rhodospirillum centenum (strain ATCC 51521 / SW), this protein is Phosphoglycerate kinase.